The sequence spans 152 residues: 3-hydroxyacyl-[acyl-carrier-protein] dehydratase FabZ (152 aa).

His-54 is an active-site residue.

The protein belongs to the thioester dehydratase family. FabZ subfamily.

It is found in the cytoplasm. It catalyses the reaction a (3R)-hydroxyacyl-[ACP] = a (2E)-enoyl-[ACP] + H2O. Involved in unsaturated fatty acids biosynthesis. Catalyzes the dehydration of short chain beta-hydroxyacyl-ACPs and long chain saturated and unsaturated beta-hydroxyacyl-ACPs. In Shewanella woodyi (strain ATCC 51908 / MS32), this protein is 3-hydroxyacyl-[acyl-carrier-protein] dehydratase FabZ.